An 87-amino-acid polypeptide reads, in one-letter code: uncharacterized protein (87 aa).

A signal peptide spans 1-19 (MLVLQLAVLVTAVYAFVHA). The helical transmembrane segment at 51 to 71 (ILGFVFGVLGIVIAACAAGVY) threads the bilayer.

To M.tuberculosis Rv0476.

The protein resides in the membrane. This is an uncharacterized protein from Mycobacterium leprae (strain TN).